A 154-amino-acid polypeptide reads, in one-letter code: Transcriptional repressor NrdR (154 aa).

A zinc finger spans residues 3-34; it reads CPTCKYNGTRVVDSRPADDGNSIRRRRECEKC. An ATP-cone domain is found at 49–139; that stretch reads LIVVKKDGAR…VYRQFKDISV (91 aa).

Belongs to the NrdR family. It depends on Zn(2+) as a cofactor.

In terms of biological role, negatively regulates transcription of bacterial ribonucleotide reductase nrd genes and operons by binding to NrdR-boxes. This is Transcriptional repressor NrdR from Listeria welshimeri serovar 6b (strain ATCC 35897 / DSM 20650 / CCUG 15529 / CIP 8149 / NCTC 11857 / SLCC 5334 / V8).